We begin with the raw amino-acid sequence, 629 residues long: G1-specific transcription factors activator MSA1 (629 aa).

Basic residues predominate over residues 1–11; that stretch reads MDKSMIKKRGR. 5 disordered regions span residues 1-60, 83-106, 217-286, 455-485, and 586-629; these read MDKS…KRRL, STPT…NDSY, YCDT…SSLQ, VQVQ…NMNS, and PNLH…IDDQ. Polar residues predominate over residues 21–37; the sequence is PLQSPMAHSSMQVQKQG. Over residues 245–260 the composition is skewed to polar residues; sequence IETSASPIGSARNNNI. Composition is skewed to low complexity over residues 261-277 and 455-475; these read LLSQ…QLKP and VQVQ…RQFQ. A Phosphoserine modification is found at Ser268. A compositionally biased stretch (basic and acidic residues) spans 614-629; the sequence is KQDDARTALKRLIDDQ.

In terms of assembly, interacts with transcription complexes SCB-binding factor (SBF) and MCB-binding factor (MBF) at their target promoters. Interacts with MBP1 and SWI6. Phosphorylated by CDC28.

In terms of biological role, activator of G1-specific transcription factors, MBF and SBF. Promotes both the timing of G1-specific gene transcription and cell cycle initiation. Associates with SBF- and MBF-regulated target promoters and this binding is maximal during the G1 phase, prior to maximum budding. Affects cell cycle initiation by advancing the timing of transcription of G1-specific genes. Overexpression advances the timing of SBF-dependent transcription and budding. Depletion delays both indicators of cell cycle initiation. The polypeptide is G1-specific transcription factors activator MSA1 (MSA1) (Saccharomyces cerevisiae (strain ATCC 204508 / S288c) (Baker's yeast)).